The sequence spans 520 residues: Bifunctional purine biosynthesis protein PurH (520 aa).

The MGS-like domain maps to 1-146; it reads MAPVALLSVS…KNHADVAVLT (146 aa).

The protein belongs to the PurH family.

It carries out the reaction (6R)-10-formyltetrahydrofolate + 5-amino-1-(5-phospho-beta-D-ribosyl)imidazole-4-carboxamide = 5-formamido-1-(5-phospho-D-ribosyl)imidazole-4-carboxamide + (6S)-5,6,7,8-tetrahydrofolate. The catalysed reaction is IMP + H2O = 5-formamido-1-(5-phospho-D-ribosyl)imidazole-4-carboxamide. It participates in purine metabolism; IMP biosynthesis via de novo pathway; 5-formamido-1-(5-phospho-D-ribosyl)imidazole-4-carboxamide from 5-amino-1-(5-phospho-D-ribosyl)imidazole-4-carboxamide (10-formyl THF route): step 1/1. It functions in the pathway purine metabolism; IMP biosynthesis via de novo pathway; IMP from 5-formamido-1-(5-phospho-D-ribosyl)imidazole-4-carboxamide: step 1/1. The chain is Bifunctional purine biosynthesis protein PurH from Synechococcus sp. (strain CC9902).